Reading from the N-terminus, the 94-residue chain is Phosphoribosyl-ATP pyrophosphatase (94 aa).

It belongs to the PRA-PH family.

The protein resides in the cytoplasm. The catalysed reaction is 1-(5-phospho-beta-D-ribosyl)-ATP + H2O = 1-(5-phospho-beta-D-ribosyl)-5'-AMP + diphosphate + H(+). The protein operates within amino-acid biosynthesis; L-histidine biosynthesis; L-histidine from 5-phospho-alpha-D-ribose 1-diphosphate: step 2/9. The polypeptide is Phosphoribosyl-ATP pyrophosphatase (Saccharolobus islandicus (strain M.16.27) (Sulfolobus islandicus)).